We begin with the raw amino-acid sequence, 270 residues long: Tryptophan synthase alpha chain (270 aa).

Active-site proton acceptor residues include E49 and D60.

The protein belongs to the TrpA family. Tetramer of two alpha and two beta chains.

The catalysed reaction is (1S,2R)-1-C-(indol-3-yl)glycerol 3-phosphate + L-serine = D-glyceraldehyde 3-phosphate + L-tryptophan + H2O. It participates in amino-acid biosynthesis; L-tryptophan biosynthesis; L-tryptophan from chorismate: step 5/5. Functionally, the alpha subunit is responsible for the aldol cleavage of indoleglycerol phosphate to indole and glyceraldehyde 3-phosphate. The polypeptide is Tryptophan synthase alpha chain (Buchnera aphidicola subsp. Diuraphis noxia).